Reading from the N-terminus, the 116-residue chain is Large ribosomal subunit protein uL18 (116 aa).

Belongs to the universal ribosomal protein uL18 family. Part of the 50S ribosomal subunit; part of the 5S rRNA/L5/L18/L25 subcomplex. Contacts the 5S and 23S rRNAs.

Its function is as follows. This is one of the proteins that bind and probably mediate the attachment of the 5S RNA into the large ribosomal subunit, where it forms part of the central protuberance. The sequence is that of Large ribosomal subunit protein uL18 from Acinetobacter baylyi (strain ATCC 33305 / BD413 / ADP1).